The following is a 147-amino-acid chain: Methylglyoxal synthase (147 aa).

The MGS-like domain maps to 1 to 147; sequence MKGQRNIGMV…TPYVKRLGAK (147 aa). Residues His-12, Lys-16, 38–41, and 59–60 each bind substrate; these read TGTT and SG. Catalysis depends on Asp-65, which acts as the Proton donor/acceptor. Residue His-92 participates in substrate binding.

It belongs to the methylglyoxal synthase family.

It carries out the reaction dihydroxyacetone phosphate = methylglyoxal + phosphate. Its function is as follows. Catalyzes the formation of methylglyoxal from dihydroxyacetone phosphate. This is Methylglyoxal synthase from Oleidesulfovibrio alaskensis (strain ATCC BAA-1058 / DSM 17464 / G20) (Desulfovibrio alaskensis).